The primary structure comprises 438 residues: Histidinol dehydrogenase (438 aa).

3 residues coordinate NAD(+): Y138, Q199, and N222. Substrate-binding residues include S245, Q267, and H270. Positions 267 and 270 each coordinate Zn(2+). Catalysis depends on proton acceptor residues E335 and H336. Positions 336, 369, 423, and 428 each coordinate substrate. Residue D369 coordinates Zn(2+). H428 contributes to the Zn(2+) binding site.

Belongs to the histidinol dehydrogenase family. The cofactor is Zn(2+).

The enzyme catalyses L-histidinol + 2 NAD(+) + H2O = L-histidine + 2 NADH + 3 H(+). It functions in the pathway amino-acid biosynthesis; L-histidine biosynthesis; L-histidine from 5-phospho-alpha-D-ribose 1-diphosphate: step 9/9. Catalyzes the sequential NAD-dependent oxidations of L-histidinol to L-histidinaldehyde and then to L-histidine. This Burkholderia lata (strain ATCC 17760 / DSM 23089 / LMG 22485 / NCIMB 9086 / R18194 / 383) protein is Histidinol dehydrogenase.